A 712-amino-acid polypeptide reads, in one-letter code: 1,4-alpha-glucan branching enzyme GlgB (712 aa).

Residue Asp397 is the Nucleophile of the active site. Glu450 (proton donor) is an active-site residue.

The protein belongs to the glycosyl hydrolase 13 family. GlgB subfamily. Monomer.

It carries out the reaction Transfers a segment of a (1-&gt;4)-alpha-D-glucan chain to a primary hydroxy group in a similar glucan chain.. It participates in glycan biosynthesis; glycogen biosynthesis. Its function is as follows. Catalyzes the formation of the alpha-1,6-glucosidic linkages in glycogen by scission of a 1,4-alpha-linked oligosaccharide from growing alpha-1,4-glucan chains and the subsequent attachment of the oligosaccharide to the alpha-1,6 position. This is 1,4-alpha-glucan branching enzyme GlgB from Bradyrhizobium sp. (strain ORS 278).